The following is a 285-amino-acid chain: Dermonecrotic toxin LiSicTox-alphaIA2aii (285 aa).

Positions 1–5 are excised as a propeptide; that stretch reads DVEER. His17 is a catalytic residue. 2 residues coordinate Mg(2+): Glu37 and Asp39. The active-site Nucleophile is the His53. Disulfide bonds link Cys57-Cys63 and Cys59-Cys202. Mg(2+) is bound at residue Asp97. An N-linked (GlcNAc...) asparagine glycan is attached at Asn262.

This sequence belongs to the arthropod phospholipase D family. Class II subfamily. Class IIa sub-subfamily. The cofactor is Mg(2+). In terms of tissue distribution, expressed by the venom gland.

The protein resides in the secreted. The catalysed reaction is an N-(acyl)-sphingosylphosphocholine = an N-(acyl)-sphingosyl-1,3-cyclic phosphate + choline. The enzyme catalyses an N-(acyl)-sphingosylphosphoethanolamine = an N-(acyl)-sphingosyl-1,3-cyclic phosphate + ethanolamine. It carries out the reaction a 1-acyl-sn-glycero-3-phosphocholine = a 1-acyl-sn-glycero-2,3-cyclic phosphate + choline. It catalyses the reaction a 1-acyl-sn-glycero-3-phosphoethanolamine = a 1-acyl-sn-glycero-2,3-cyclic phosphate + ethanolamine. Functionally, dermonecrotic toxins cleave the phosphodiester linkage between the phosphate and headgroup of certain phospholipids (sphingolipid and lysolipid substrates), forming an alcohol (often choline) and a cyclic phosphate. This toxin acts on sphingomyelin (SM) with high activity. It may also act on ceramide phosphoethanolamine (CPE), lysophosphatidylcholine (LPC) and lysophosphatidylethanolamine (LPE), but not on lysophosphatidylserine (LPS), and lysophosphatidylglycerol (LPG). It acts by transphosphatidylation, releasing exclusively cyclic phosphate products as second products. Shows high hemolytic activity. Induces dermonecrosis, vascular permeability, edema, inflammatory response, and platelet aggregation. Also shows cytotoxicity against renal epithelial cells. In addition, also induces hemolysis in a complement-dependent manner and probably also in a complement-independent manner. The hemolysis provoked in a complement-independent manner may be composed of several steps. The toxin may bind to erythrocyte membranes, may hydrolyze membrane phospholipids (SM and LPC) thus generating metabolism products that may cause hemolysis, probably by provoking an increase of calcium inside cells. The calcium influx may be due to the opening of L-type calcium channels, since L-type calcium channel blockers inhibit calcium influx. In vivo, is lethal to mice when intraperitoneally injected. This is Dermonecrotic toxin LiSicTox-alphaIA2aii from Loxosceles intermedia (Brown spider).